We begin with the raw amino-acid sequence, 78 residues long: Small ribosomal subunit protein bS18 (78 aa).

It belongs to the bacterial ribosomal protein bS18 family. Part of the 30S ribosomal subunit. Forms a tight heterodimer with protein bS6.

Its function is as follows. Binds as a heterodimer with protein bS6 to the central domain of the 16S rRNA, where it helps stabilize the platform of the 30S subunit. The protein is Small ribosomal subunit protein bS18 of Clostridium novyi (strain NT).